A 61-amino-acid polypeptide reads, in one-letter code: Disintegrin atroxatin (61 aa).

The Disintegrin domain occupies 1–61 (NPCCDAATCK…ADCPRKGIYG (61 aa)). 5 disulfides stabilise this stretch: C3/C26, C9/C23, C17/C23, C22/C47, and C35/C54. A Cell attachment site motif is present at residues 39–41 (RGD).

This sequence belongs to the venom metalloproteinase (M12B) family. P-II subfamily. P-IIa sub-subfamily. Monomer (disintegrin). In terms of tissue distribution, expressed by the venom gland.

The protein localises to the secreted. In terms of biological role, inhibits fibrinogen interaction with platelets. Acts by binding to alpha-IIb/beta-3 (ITGA2B/ITGB3) on the platelet surface and inhibits aggregation induced by ADP, thrombin, platelet-activating factor and collagen. The chain is Disintegrin atroxatin from Crotalus atrox (Western diamondback rattlesnake).